The following is a 172-amino-acid chain: Small ribosomal subunit protein uS5 (172 aa).

The S5 DRBM domain occupies Leu17–Val80.

It belongs to the universal ribosomal protein uS5 family. In terms of assembly, part of the 30S ribosomal subunit. Contacts proteins S4 and S8.

In terms of biological role, with S4 and S12 plays an important role in translational accuracy. Functionally, located at the back of the 30S subunit body where it stabilizes the conformation of the head with respect to the body. The protein is Small ribosomal subunit protein uS5 of Burkholderia pseudomallei (strain 1106a).